The chain runs to 249 residues: Probable endopeptidase YafL (249 aa).

The first 17 residues, 1–17 (MSLPSIPSFVLSGLLLI), serve as a signal peptide directing secretion. Cysteine 18 carries N-palmitoyl cysteine lipidation. Residue cysteine 18 is the site of S-diacylglycerol cysteine attachment. Residues 116-243 (HNITEVAIHR…DHFLGARRIL (128 aa)) form the NlpC/P60 domain. Cysteine 147 (nucleophile) is an active-site residue. Histidine 202 (proton acceptor) is an active-site residue. The active site involves glutamate 214.

The protein belongs to the peptidase C40 family.

It localises to the cell membrane. The protein is Probable endopeptidase YafL (yafL) of Escherichia coli (strain K12).